A 377-amino-acid polypeptide reads, in one-letter code: Chaperone protein DnaJ (377 aa).

The J domain occupies 5-70 (DYYEVLEVSR…EKRTIYDRYG (66 aa)). The CR-type zinc-finger motif lies at 138–215 (GCEKKIDITY…CQGKGYHEET (78 aa)). Cysteine 151, cysteine 154, cysteine 167, cysteine 170, cysteine 189, cysteine 192, cysteine 203, and cysteine 206 together coordinate Zn(2+). CXXCXGXG motif repeat units follow at residues 151–158 (CEECGGTG), 167–174 (CDYCGGQG), 189–196 (CPKCHGEG), and 203–210 (CPSCQGKG).

It belongs to the DnaJ family. Homodimer. Zn(2+) is required as a cofactor.

Its subcellular location is the cytoplasm. Functionally, participates actively in the response to hyperosmotic and heat shock by preventing the aggregation of stress-denatured proteins and by disaggregating proteins, also in an autonomous, DnaK-independent fashion. Unfolded proteins bind initially to DnaJ; upon interaction with the DnaJ-bound protein, DnaK hydrolyzes its bound ATP, resulting in the formation of a stable complex. GrpE releases ADP from DnaK; ATP binding to DnaK triggers the release of the substrate protein, thus completing the reaction cycle. Several rounds of ATP-dependent interactions between DnaJ, DnaK and GrpE are required for fully efficient folding. Also involved, together with DnaK and GrpE, in the DNA replication of plasmids through activation of initiation proteins. The polypeptide is Chaperone protein DnaJ (Sulfurovum sp. (strain NBC37-1)).